Here is a 525-residue protein sequence, read N- to C-terminus: Cytochrome P450 714A2 (525 aa).

Topologically, residues 1–3 (MES) are lumenal. A helical; Signal-anchor for type III membrane protein transmembrane segment spans residues 4 to 24 (LVVHTVNAIWCIVIVGIFSVG). Topologically, residues 25-525 (YHVYGRAVVE…PQHGVVIRVV (501 aa)) are cytoplasmic. C475 is a binding site for heme.

It belongs to the cytochrome P450 family. Heme is required as a cofactor. In terms of tissue distribution, expressed in the shoot apical meristem (SAM) and petioles of young leaves, in the leaf margin and petiole vein of cotyledons, and at low levels in the filaments of developing flowers. Not detected in siliques.

Its subcellular location is the endoplasmic reticulum membrane. In terms of biological role, involved in the inactivation of early gibberellin (GA) intermediates. The protein is Cytochrome P450 714A2 (CYP714A2) of Arabidopsis thaliana (Mouse-ear cress).